The chain runs to 250 residues: Ribosomal RNA small subunit methyltransferase J (250 aa).

Residues 101–102 (RD), 117–118 (ER), 153–154 (SS), and D171 contribute to the S-adenosyl-L-methionine site.

It belongs to the methyltransferase superfamily. RsmJ family.

It localises to the cytoplasm. It catalyses the reaction guanosine(1516) in 16S rRNA + S-adenosyl-L-methionine = N(2)-methylguanosine(1516) in 16S rRNA + S-adenosyl-L-homocysteine + H(+). Specifically methylates the guanosine in position 1516 of 16S rRNA. The chain is Ribosomal RNA small subunit methyltransferase J from Klebsiella pneumoniae (strain 342).